The following is a 186-amino-acid chain: EF-hand protein 5 (186 aa).

Residues 1 to 23 are disordered; that stretch reads MSRSKEVSPNLSQQKRGDVRSAG. 4 consecutive EF-hand domains span residues 41 to 76, 77 to 112, 113 to 148, and 149 to 186; these read SAEL…GLHT, SEEE…GIDE, ASIA…SGEH, and SSAE…LNKM. Ca(2+) is bound by residues Glu98, Asp126, and Thr130.

This chain is EF-hand protein 5, found in Leishmania tarentolae (Sauroleishmania tarentolae).